We begin with the raw amino-acid sequence, 291 residues long: Bifunctional protein FolD (291 aa).

NADP(+) contacts are provided by residues 173–175 (GRS) and serine 198.

This sequence belongs to the tetrahydrofolate dehydrogenase/cyclohydrolase family. Homodimer.

The enzyme catalyses (6R)-5,10-methylene-5,6,7,8-tetrahydrofolate + NADP(+) = (6R)-5,10-methenyltetrahydrofolate + NADPH. It carries out the reaction (6R)-5,10-methenyltetrahydrofolate + H2O = (6R)-10-formyltetrahydrofolate + H(+). Its pathway is one-carbon metabolism; tetrahydrofolate interconversion. Functionally, catalyzes the oxidation of 5,10-methylenetetrahydrofolate to 5,10-methenyltetrahydrofolate and then the hydrolysis of 5,10-methenyltetrahydrofolate to 10-formyltetrahydrofolate. This is Bifunctional protein FolD from Psychrobacter sp. (strain PRwf-1).